Reading from the N-terminus, the 339-residue chain is D-erythrose-4-phosphate dehydrogenase (339 aa).

Position 11–12 (11–12 (RI)) interacts with NAD(+). Residues 153–155 (SCT), Arg-199, 212–213 (TK), and Arg-235 contribute to the substrate site. Cys-154 functions as the Nucleophile in the catalytic mechanism. Asn-317 is an NAD(+) binding site.

The protein belongs to the glyceraldehyde-3-phosphate dehydrogenase family. Epd subfamily. As to quaternary structure, homotetramer.

It localises to the cytoplasm. It carries out the reaction D-erythrose 4-phosphate + NAD(+) + H2O = 4-phospho-D-erythronate + NADH + 2 H(+). The protein operates within cofactor biosynthesis; pyridoxine 5'-phosphate biosynthesis; pyridoxine 5'-phosphate from D-erythrose 4-phosphate: step 1/5. Its function is as follows. Catalyzes the NAD-dependent conversion of D-erythrose 4-phosphate to 4-phosphoerythronate. This is D-erythrose-4-phosphate dehydrogenase from Shewanella frigidimarina (strain NCIMB 400).